Reading from the N-terminus, the 370-residue chain is MLTCIACTKQLNTNNGGSTREEDEEHGVIGTPRTKQAIKSLTSQLKDMAVKASGAYKNCKPCSGTTNRNQNRNYADSDAASDSGRFHYSYQRAGTATSTPKIWGNEMESRLKGISSEEGTPTSMSGRTESIVFMEDDEVKEWVAQVEPGVLITFVSLPQGGNDLKRIRFRSTRFPYYRDQLLLWCRQGWVFWPQNCREMFNKWQAQKWWVENFEKVMELYNVQFNQQSVPLQTPPVSEDGGSQIQSVKDSPVTPPLERERPHRNIPGSSGFASTPKLSSISGTKTETSSIDGSARSSSVDRSEEVSVSNASDMESEWVEQDEPGIYITIRALPDGNRELRRVRFSRDKFGETHARLWWEQNRARIQQQYL.

In terms of domain architecture, BRX 1 spans 140–221 (KEWVAQVEPG…NFEKVMELYN (82 aa)). Composition is skewed to polar residues over residues 231-248 (LQTP…QSVK) and 266-291 (PGSS…SSID). Residues 231 to 316 (LQTPPVSEDG…VSNASDMESE (86 aa)) are disordered. The BRX 2 domain occupies 315 to 370 (SEWVEQDEPGIYITIRALPDGNRELRRVRFSRDKFGETHARLWWEQNRARIQQQYL).

Belongs to the BRX family. Expressed in roots.

Its subcellular location is the nucleus. This is Protein Brevis radix-like 3 (BRXL3) from Arabidopsis thaliana (Mouse-ear cress).